The primary structure comprises 331 residues: Pectinesterase (331 aa).

An N-terminal signal peptide occupies residues methionine 1–alanine 17. Residue glutamine 138 coordinates substrate. The Proton donor role is filled by aspartate 161. Aspartate 182 functions as the Nucleophile in the catalytic mechanism. Substrate contacts are provided by arginine 247 and tryptophan 249.

This sequence belongs to the pectinesterase family.

Its subcellular location is the secreted. The catalysed reaction is [(1-&gt;4)-alpha-D-galacturonosyl methyl ester](n) + n H2O = [(1-&gt;4)-alpha-D-galacturonosyl](n) + n methanol + n H(+). The protein operates within glycan metabolism; pectin degradation; 2-dehydro-3-deoxy-D-gluconate from pectin: step 1/5. In terms of biological role, involved in maceration and soft-rotting of plant tissue. The polypeptide is Pectinesterase (pme1) (Aspergillus niger).